A 524-amino-acid chain; its full sequence is Solute carrier family 35 member F5 (524 aa).

The interval 1–22 (MVPPRHHPGAGRPGALSSSPPF) is disordered. The span at 13 to 22 (PGALSSSPPF) shows a compositional bias: low complexity. A run of 2 helical transmembrane segments spans residues 69 to 89 (MALGIVILLLVDVIWVASSEL) and 101 to 121 (FFSTFAKTSMFVLYLLGFIVW). Position 207 is a phosphoserine (Ser-207). Transmembrane regions (helical) follow at residues 244-264 (ISFFFCFVWFLANFSYQEALS), 269-289 (AIVNILSSTSGLFTLILAAMF), 297-317 (FTLSKLLAVILSIGGVVLVNL), 328-348 (TIGSIWSLVGAMLYAVYIVMI), 362-382 (MFFGFVGLFNLLLLWPGFFLL), 396-416 (VVLMCIVINGLIGTVLSEFLW), 421-441 (FLTSSLIGTLALSLTIPLSII), and 453-473 (WLFFAGAIPVFFSFFIATLLC). The EamA domain maps to 253-317 (FLANFSYQEA…SIGGVVLVNL (65 aa)).

Belongs to the SLC35F solute transporter family.

It is found in the membrane. Functionally, putative solute transporter. This chain is Solute carrier family 35 member F5 (SLC35F5), found in Bos taurus (Bovine).